Here is a 455-residue protein sequence, read N- to C-terminus: MAISVFDLFSIGIGPSSSHTVGPMRAARMFARRLRNEELLDSVASVRVELYGSLGATGHGHGTPKAVLLGLEGDSPRTVDVESADDRVETIKSSGRISLLGDHEIAFAYDDDMVLHRRKALPYHANGMTLWAYDAEGAEVLTKTYYSVGGGFVVDEDAVGADRIVLDDTVLKYPFRTGDELLRLARETGLSISALMLENERAWRDEDEIREGLLEIWRVMRACVDRGMTREGILPGGLKVRRRAANTARKLRSEGDPQALAMEWITLYAMAVNEENAAGGRVVTAPTNGAAGIIPAVLHYYMNFVPGADEDGVVRFLLAAGAIGMLFKENASISGAEVGCQGEVGSACSMAAGALAEVLGGSPEQVENAAEIGMEHNLGLTCDPVGGLVQIPCIERNGMAAVKAVTAARMAMRGDGSHKVSLDKVIKTMKETGADMSVKYKETARGGLAVNIIEC.

Belongs to the iron-sulfur dependent L-serine dehydratase family. [4Fe-4S] cluster serves as cofactor.

The catalysed reaction is L-serine = pyruvate + NH4(+). It functions in the pathway carbohydrate biosynthesis; gluconeogenesis. The polypeptide is L-serine dehydratase (sdaA) (Streptomyces coelicolor (strain ATCC BAA-471 / A3(2) / M145)).